A 393-amino-acid polypeptide reads, in one-letter code: Calreticulin (393 aa).

Positions 1–16 are cleaved as a signal peptide; that stretch reads MLSILLTLLLSKYALG. Asn27 carries an N-linked (GlcNAc...) asparagine glycan. A disulfide bridge connects residues Cys103 and Cys135. An alpha-D-glucoside contacts are provided by Tyr107, Lys109, Tyr126, and Asp133. 7 tandem repeats follow at residues 189-200, 208-219, 225-236, 242-253, 257-267, 271-281, and 285-295. A 4 X 12 AA approximate repeats region spans residues 189–253; it reads VEEGSLEDDW…DAKKPDDWDD (65 aa). The segment at 194–277 is disordered; it reads LEDDWDMLPP…EYKGEWTPRR (84 aa). The span at 202–216 shows a compositional bias: basic and acidic residues; the sequence is PPKKIDDPNDKKPDD. Residues 217-226 show a composition bias toward acidic residues; sequence WVDEQFIDDP. 2 stretches are compositionally biased toward basic and acidic residues: residues 227–249 and 258–277; these read DDKK…KKPD and EWER…TPRR. Positions 257–295 are 3 X 11 AA approximate repeats; sequence GEWERPQKDNPEYKGEWTPRRIDNPKYKGEWKPVQIDNP. Position 315 (Asp315) interacts with an alpha-D-glucoside. The interval 351 to 393 is disordered; the sequence is AEVAKEQSSAKDDKEEAEETKERKELPYDAKASDEPSGDHDEL. Positions 390–393 match the Prevents secretion from ER motif; the sequence is HDEL.

The protein belongs to the calreticulin family.

It is found in the endoplasmic reticulum lumen. Molecular calcium-binding chaperone promoting folding, oligomeric assembly and quality control in the ER via the calreticulin/calnexin cycle. This lectin may interact transiently with almost all of the monoglucosylated glycoproteins that are synthesized in the ER. The polypeptide is Calreticulin (Schistosoma mansoni (Blood fluke)).